Here is a 291-residue protein sequence, read N- to C-terminus: 5'-3' exonuclease (291 aa).

One can recognise a 5'-3' exonuclease domain in the interval 176 to 269 (APYQVVEYKG…DLTGLKPIQK (94 aa)).

Its function is as follows. 5'-3' exonuclease acting preferentially on double-stranded DNA. The chain is 5'-3' exonuclease (polA) from Mycoplasma genitalium (strain ATCC 33530 / DSM 19775 / NCTC 10195 / G37) (Mycoplasmoides genitalium).